We begin with the raw amino-acid sequence, 305 residues long: Serine/threonine-protein phosphatase PP-X isozyme 2 (305 aa).

The Mn(2+) site is built by Asp51, His53, Asp79, and Asn111. The Proton donor role is filled by His112. 2 residues coordinate Mn(2+): His161 and His236.

Belongs to the PPP phosphatase family. PP-4 (PP-X) subfamily. Mn(2+) is required as a cofactor. Ubiquitous, mostly expressed in root mersitems, flowers, and vascular tissues.

The protein localises to the plastid stroma. It catalyses the reaction O-phospho-L-seryl-[protein] + H2O = L-seryl-[protein] + phosphate. The catalysed reaction is O-phospho-L-threonyl-[protein] + H2O = L-threonyl-[protein] + phosphate. The sequence is that of Serine/threonine-protein phosphatase PP-X isozyme 2 (PPX2) from Arabidopsis thaliana (Mouse-ear cress).